Consider the following 212-residue polypeptide: ER lumen protein-retaining receptor (212 aa).

Over M1–N2 the chain is Lumenal. The chain crosses the membrane as a helical span at residues I3–L21. Topologically, residues K22–K35 are cytoplasmic. Residues S36–T53 traverse the membrane as a helical segment. Topologically, residues T54–S61 are lumenal. Residues V62–V80 form a helical membrane-spanning segment. Topologically, residues K81 to E96 are cytoplasmic. A helical transmembrane segment spans residues F97–N110. Residues H111–E117 lie on the Lumenal side of the membrane. The helical transmembrane segment at V118–L137 threads the bilayer. At V138–S149 the chain is on the cytoplasmic side. A helical membrane pass occupies residues H150 to Y168. Residues R169–L178 are Lumenal-facing. The chain crosses the membrane as a helical span at residues I179–I199. Topologically, residues T200–A212 are cytoplasmic.

This sequence belongs to the ERD2 family.

The protein resides in the endoplasmic reticulum membrane. Its function is as follows. Required for the retention of luminal endoplasmic reticulum proteins. Determines the specificity of the luminal ER protein retention system. Also required for normal vesicular traffic through the Golgi. This chain is ER lumen protein-retaining receptor (KdelR), found in Drosophila melanogaster (Fruit fly).